The following is a 1097-amino-acid chain: Transmembrane protein 132D (1097 aa).

An N-terminal signal peptide occupies residues 1–30 (MCPSEMGTLWYLWSPVLISLAALFSKVTEG). At 31–913 (RGILESIQRF…LDQAAKGLSD (883 aa)) the chain is on the extracellular side. Residues 233 to 245 (DERGDCAKEDSRK) are compositionally biased toward basic and acidic residues. The tract at residues 233–263 (DERGDCAKEDSRKSGGTPAGHNDVDESSPPL) is disordered. Residues 914–934 (LEIGMYALLGVFCLAILVFLI) traverse the membrane as a helical segment. The Cytoplasmic segment spans residues 935–1097 (NCVTFALKYR…SCMERLHEHV (163 aa)). The segment at 1021–1042 (MLTDDQEQKSEPPTSPTSKRKR) is disordered.

The protein belongs to the TMEM132 family. Expressed in mature oligodendrocytes in the white and gray matter of the brain.

The protein resides in the membrane. Its function is as follows. Regulates neuronal morphology via inhibition of the WAVE regulatory complex (WCR), a complex that controls F-actin cytoskeletal dynamics. This chain is Transmembrane protein 132D (Tmem132d), found in Mus musculus (Mouse).